We begin with the raw amino-acid sequence, 144 residues long: Phospholipase A2 (144 aa).

The signal sequence occupies residues 1–15 (MKFLVLAALLTAGTA). The propeptide at 16-22 (ASGVSPT) is activation peptide. 7 cysteine pairs are disulfide-bonded: C33/C99, C49/C144, C51/C67, C66/C127, C73/C120, C83/C113, and C106/C118. Ca(2+) contacts are provided by Y50, G52, and G54. The active site involves H70. Residue D71 coordinates Ca(2+). D121 is a catalytic residue.

This sequence belongs to the phospholipase A2 family. Monomer or homodimer. The cofactor is Ca(2+). Activated by trypsin cleavage in the duodenum. Can also be activated by thrombin or autocatalytically.

It is found in the secreted. It catalyses the reaction a 1,2-diacyl-sn-glycero-3-phosphocholine + H2O = a 1-acyl-sn-glycero-3-phosphocholine + a fatty acid + H(+). It carries out the reaction 1,2-ditetradecanoyl-sn-glycero-3-phosphocholine + H2O = 1-tetradecanoyl-sn-glycero-3-phosphocholine + tetradecanoate + H(+). The catalysed reaction is 1,2-dihexadecanoyl-sn-glycero-3-phosphocholine + H2O = 1-hexadecanoyl-sn-glycero-3-phosphocholine + hexadecanoate + H(+). The enzyme catalyses 1-hexadecanoyl-2-(9Z-octadecenoyl)-sn-glycero-3-phosphocholine + H2O = 1-hexadecanoyl-sn-glycero-3-phosphocholine + (9Z)-octadecenoate + H(+). It catalyses the reaction 1-hexadecanoyl-2-(5Z,8Z,11Z,14Z-eicosatetraenoyl)-sn-glycero-3-phosphocholine + H2O = 1-hexadecanoyl-sn-glycero-3-phosphocholine + (5Z,8Z,11Z,14Z)-eicosatetraenoate + H(+). It carries out the reaction 1-hexadecanoyl-2-(9Z-octadecenoyl)-sn-glycero-3-phospho-(1'-sn-glycerol) + H2O = 1-hexadecanoyl-sn-glycero-3-phospho-(1'-sn-glycerol) + (9Z)-octadecenoate + H(+). The catalysed reaction is N-hexadecanoyl-1,2-di-(9Z-octadecenoyl)-sn-glycero-3-phosphoethanolamine + H2O = N-hexadecanoyl-1-(9Z-octadecenoyl)-sn-glycero-3-phosphoethanolamine + (9Z)-octadecenoate + H(+). The enzyme catalyses 1-hexadecanoyl-2-(9Z,12Z-octadecadienoyl)-sn-glycero-3-phosphoethanolamine + H2O = 1-hexadecanoyl-sn-glycero-3-phosphoethanolamine + (9Z,12Z)-octadecadienoate + H(+). It catalyses the reaction N,1-dihexadecanoyl-2-(9Z,12Z-octadecadienoyl)-sn-glycero-3-phosphoethanolamine + H2O = N,1-dihexadecanoyl-sn-glycero-3-phosphoethanolamine + (9Z,12Z)-octadecadienoate + H(+). Functionally, secretory calcium-dependent phospholipase A2 that primarily targets dietary phospholipids in the intestinal tract. Hydrolyzes the ester bond of the fatty acyl group attached at sn-2 position of phospholipids (phospholipase A2 activity) with preference for phosphatidylethanolamines and phosphatidylglycerols over phosphatidylcholines. May play a role in the biosynthesis of N-acyl ethanolamines that regulate energy metabolism and inflammation in the intestinal tract. Hydrolyzes N-acyl phosphatidylethanolamines to N-acyl lysophosphatidylethanolamines, which are further cleaved by a lysophospholipase D to release N-acyl ethanolamines. May act in an autocrine and paracrine manner. Has anti-helminth activity in a process regulated by gut microbiota. Upon helminth infection of intestinal epithelia, directly affects phosphatidylethanolamine contents in the membrane of helminth larvae, likely controlling an array of phospholipid-mediated cellular processes such as membrane fusion and cell division while providing for better immune recognition, ultimately reducing larvae integrity and infectivity. The protein is Phospholipase A2 (PLA2G1B) of Oryctolagus cuniculus (Rabbit).